The chain runs to 283 residues: Digeranylgeranylglyceryl phosphate synthase (283 aa).

A run of 8 helical transmembrane segments spans residues 21–41 (ITAS…EIDI), 45–65 (LLVF…NDIF), 97–117 (LILG…IAVI), 135–155 (IGNF…GVAG), 158–178 (VMPV…REIV), 204–224 (LYFA…PYIL), 226–246 (IFGI…IYAM), and 261–281 (VSKF…VGAI).

The protein belongs to the UbiA prenyltransferase family. DGGGP synthase subfamily. Mg(2+) serves as cofactor.

The protein localises to the cell membrane. The catalysed reaction is sn-3-O-(geranylgeranyl)glycerol 1-phosphate + (2E,6E,10E)-geranylgeranyl diphosphate = 2,3-bis-O-(geranylgeranyl)-sn-glycerol 1-phosphate + diphosphate. It functions in the pathway membrane lipid metabolism; glycerophospholipid metabolism. Its function is as follows. Prenyltransferase that catalyzes the transfer of the geranylgeranyl moiety of geranylgeranyl diphosphate (GGPP) to the C2 hydroxyl of (S)-3-O-geranylgeranylglyceryl phosphate (GGGP). This reaction is the second ether-bond-formation step in the biosynthesis of archaeal membrane lipids. This chain is Digeranylgeranylglyceryl phosphate synthase, found in Methanocaldococcus jannaschii (strain ATCC 43067 / DSM 2661 / JAL-1 / JCM 10045 / NBRC 100440) (Methanococcus jannaschii).